The chain runs to 324 residues: MQSTQPIQRCALGSQQALPELAVSLLDNLGLITMTGNDKKSYLQGQVTCDVVSLEADQVTWGGHCDAKGKLWSAFRLFHYGDGYAMLQDKSAIDVELRELKKYAVFAKVEINVSDAILLGVCGVQAEQAIAKLTNNAEAAVATFAQGTAVKISPQRWLLVVDANQQDEVLAMLATAPLCDHALWDLYDILEVSPRIPAFAQNEHIPQAVNLQAVNGISFKKGCYTGQETVARAKYRGINKRALYRLSGAIEPSAPETTISLERSVGDNWRAAGEALVSYHFDDGRATGLFVLPNDLEPETQFRLAGQSEQLWQREPLPYSLDDE.

Tryptophan 184 is a binding site for folate.

It belongs to the tRNA-modifying YgfZ family.

Its subcellular location is the cytoplasm. In terms of biological role, folate-binding protein involved in regulating the level of ATP-DnaA and in the modification of some tRNAs. It is probably a key factor in regulatory networks that act via tRNA modification, such as initiation of chromosomal replication. The chain is tRNA-modifying protein YgfZ from Vibrio vulnificus (strain YJ016).